A 968-amino-acid chain; its full sequence is RNA polymerase-associated protein RapA (968 aa).

Positions 164–334 constitute a Helicase ATP-binding domain; it reads DVGRRHAPRV…FARLRLLDPN (171 aa). Residue 177-184 coordinates ATP; it reads DEVGLGKT. A DEAH box motif is present at residues 280–283; the sequence is DEAH. The region spanning 490–662 is the Helicase C-terminal domain; it reads RVEWLMGYLT…YLASPVQTEG (173 aa).

The protein belongs to the SNF2/RAD54 helicase family. RapA subfamily. In terms of assembly, interacts with the RNAP. Has a higher affinity for the core RNAP than for the holoenzyme. Its ATPase activity is stimulated by binding to RNAP.

In terms of biological role, transcription regulator that activates transcription by stimulating RNA polymerase (RNAP) recycling in case of stress conditions such as supercoiled DNA or high salt concentrations. Probably acts by releasing the RNAP, when it is trapped or immobilized on tightly supercoiled DNA. Does not activate transcription on linear DNA. Probably not involved in DNA repair. The protein is RNA polymerase-associated protein RapA of Shigella sonnei (strain Ss046).